The chain runs to 61 residues: DNA-directed RNA polymerase subunit Rpo6 (61 aa).

It belongs to the archaeal Rpo6/eukaryotic RPB6 RNA polymerase subunit family. Part of the RNA polymerase complex.

It is found in the cytoplasm. The catalysed reaction is RNA(n) + a ribonucleoside 5'-triphosphate = RNA(n+1) + diphosphate. In terms of biological role, DNA-dependent RNA polymerase (RNAP) catalyzes the transcription of DNA into RNA using the four ribonucleoside triphosphates as substrates. This is DNA-directed RNA polymerase subunit Rpo6 from Thermoplasma volcanium (strain ATCC 51530 / DSM 4299 / JCM 9571 / NBRC 15438 / GSS1).